The sequence spans 361 residues: Peptide chain release factor 1 (361 aa).

Glutamine 237 bears the N5-methylglutamine mark. Basic and acidic residues predominate over residues 284-296 (EDEKRRSEEDSTR). Residues 284 to 305 (EDEKRRSEEDSTRRNLVSSGDR) are disordered.

It belongs to the prokaryotic/mitochondrial release factor family. Methylated by PrmC. Methylation increases the termination efficiency of RF1.

The protein resides in the cytoplasm. Peptide chain release factor 1 directs the termination of translation in response to the peptide chain termination codons UAG and UAA. This is Peptide chain release factor 1 from Shewanella piezotolerans (strain WP3 / JCM 13877).